The sequence spans 388 residues: Succinate--CoA ligase [ADP-forming] subunit beta (388 aa).

An ATP-grasp domain is found at 9-244 (KQLFAEFGLP…ASQEDAREAH (236 aa)). Residues lysine 46, 53–55 (GRG), glutamate 99, serine 102, and glutamate 107 each bind ATP. Positions 199 and 213 each coordinate Mg(2+). Residues asparagine 264 and 321–323 (GIV) each bind substrate.

Belongs to the succinate/malate CoA ligase beta subunit family. In terms of assembly, heterotetramer of two alpha and two beta subunits. Mg(2+) serves as cofactor.

It carries out the reaction succinate + ATP + CoA = succinyl-CoA + ADP + phosphate. The catalysed reaction is GTP + succinate + CoA = succinyl-CoA + GDP + phosphate. It participates in carbohydrate metabolism; tricarboxylic acid cycle; succinate from succinyl-CoA (ligase route): step 1/1. Succinyl-CoA synthetase functions in the citric acid cycle (TCA), coupling the hydrolysis of succinyl-CoA to the synthesis of either ATP or GTP and thus represents the only step of substrate-level phosphorylation in the TCA. The beta subunit provides nucleotide specificity of the enzyme and binds the substrate succinate, while the binding sites for coenzyme A and phosphate are found in the alpha subunit. This chain is Succinate--CoA ligase [ADP-forming] subunit beta, found in Vibrio cholerae serotype O1 (strain ATCC 39541 / Classical Ogawa 395 / O395).